The following is a 255-amino-acid chain: Antigen LPMC-61 (255 aa).

Tandem repeats lie at residues 18 to 48 (WPER…QKQQ), 49 to 57 (WPEGQRQQL), 58 to 65 (WPEQQQQQ), 66 to 78 (WPEQ…QQQQ), 79 to 90 (WPQQQPQMQQEQ), 91 to 103 (WPQQ…QQQQ), 104 to 140 (WPQQ…LQQQ), 141 to 152 (WSEQQQQQQQQQ), 153 to 164 (WPEQPEQQQQQQ), 165 to 172 (WPEQQQQQ), 173 to 192 (WSDQ…QQQQ), and 193 to 210 (WPQQ…QQQQ). Positions 18–90 (WPERQQQQQP…QQQPQMQQEQ (73 aa)) are disordered. The 12 X approximate tandem repeats, Gln-rich stretch occupies residues 18–210 (WPERQQQQQP…QQQQQQQQQQ (193 aa)). The span at 149-210 (QQQQWPEQPE…QQQQQQQQQQ (62 aa)) shows a compositional bias: low complexity. A disordered region spans residues 149–224 (QQQQWPEQPE…DGVGIVVPYL (76 aa)).

In terms of assembly, may be covalently linked by disulfide bonds to other polypeptides to form the 80 kDa antigen.

Functionally, unknown. The Gln-rich tandem repeats may be important for an unknown aspect of the parasitic life cycle. May be an important immunogen. In Eimeria tenella (Coccidian parasite), this protein is Antigen LPMC-61.